The primary structure comprises 306 residues: 1-aminocyclopropane-1-carboxylate oxidase (306 aa).

In terms of domain architecture, Fe2OG dioxygenase spans 153–253; that stretch reads PFFGTKVSHY…RRSIASFYNP (101 aa). Fe cation-binding residues include His177, Asp179, and His234.

Belongs to the iron/ascorbate-dependent oxidoreductase family. Fe cation serves as cofactor.

The catalysed reaction is 1-aminocyclopropane-1-carboxylate + L-ascorbate + O2 = ethene + L-dehydroascorbate + hydrogen cyanide + CO2 + 2 H2O. Its pathway is alkene biosynthesis; ethylene biosynthesis via S-adenosyl-L-methionine; ethylene from S-adenosyl-L-methionine: step 2/2. This chain is 1-aminocyclopropane-1-carboxylate oxidase (MAO1B), found in Musa acuminata (Banana).